A 207-amino-acid chain; its full sequence is Octanoyltransferase (207 aa).

The BPL/LPL catalytic domain occupies 29–204 (AETRDELWVV…HLERHLSTSK (176 aa)). Substrate contacts are provided by residues 68–75 (RGGQITYH), 135–137 (SLG), and 148–150 (GLS). Cys-166 acts as the Acyl-thioester intermediate in catalysis.

It belongs to the LipB family.

It is found in the cytoplasm. It catalyses the reaction octanoyl-[ACP] + L-lysyl-[protein] = N(6)-octanoyl-L-lysyl-[protein] + holo-[ACP] + H(+). It participates in protein modification; protein lipoylation via endogenous pathway; protein N(6)-(lipoyl)lysine from octanoyl-[acyl-carrier-protein]: step 1/2. Its function is as follows. Catalyzes the transfer of endogenously produced octanoic acid from octanoyl-acyl-carrier-protein onto the lipoyl domains of lipoate-dependent enzymes. Lipoyl-ACP can also act as a substrate although octanoyl-ACP is likely to be the physiological substrate. This chain is Octanoyltransferase, found in Chromobacterium violaceum (strain ATCC 12472 / DSM 30191 / JCM 1249 / CCUG 213 / NBRC 12614 / NCIMB 9131 / NCTC 9757 / MK).